A 146-amino-acid chain; its full sequence is UPF0735 ACT domain-containing protein Cphy_3604 (146 aa).

The 76-residue stretch at 70-145 (TFMLQMDDIP…GIHYLKILGR (76 aa)) folds into the ACT domain.

It belongs to the UPF0735 family.

This is UPF0735 ACT domain-containing protein Cphy_3604 from Lachnoclostridium phytofermentans (strain ATCC 700394 / DSM 18823 / ISDg) (Clostridium phytofermentans).